Consider the following 440-residue polypeptide: MEGESKGLIVGISLGLVIGVVLAISALFCFRYHRKKSQIVNSGSRRSATIPIRENGADSCNIMSDSTIGPDSPVKSSKNGRSVWLEGFSKRSNVISASGILEYSYRDLQKATCNFTTLIGQGAFGPVYKAQMSTGEIVAVKVLATDSKQGEKEFQTEVMLLGRLHHRNLVNLIGYCAEKGQHMLIYVYMSKGSLASHLYSEKHEPLSWDLRVYIALDVARGLEYLHDGAVPPVIHRDIKSSNILLDQSMRARVADFGLSREEMVDKHAANIRGTFGYLDPEYISTRTFTKKSDVYGFGVLLFELIAGRNPQQGLMELVELAAMNAEEKVGWEEIVDSRLDGRYDLQEVNEVAAFAYKCISRAPRKRPNMRDIVQVLTRVIKVRHCRKRQKNSPSPSPRLPPPPPIVEESEGELTANGSLRSEIHRRDNSLDSSIAEDVIL.

The chain crosses the membrane as a helical span at residues 8–28 (LIVGISLGLVIGVVLAISALF). Positions 28–228 (FCFRYHRKKS…ARGLEYLHDG (201 aa)) are calmodulin binding. The Protein kinase domain occupies 113-380 (CNFTTLIGQG…DIVQVLTRVI (268 aa)). ATP is bound by residues 119–127 (IGQGAFGPV) and K141. Y186 carries the phosphotyrosine modification. The active-site Proton acceptor is D237. S241 is subject to Phosphoserine. Position 274 is a phosphothreonine (T274). Y282 bears the Phosphotyrosine mark. The tract at residues 369 to 440 (MRDIVQVLTR…DSSIAEDVIL (72 aa)) is calmodulin binding. Residues 386-427 (RKRQKNSPSPSPRLPPPPPIVEESEGELTANGSLRSEIHRRD) form a disordered region. Residues 394–405 (SPSPRLPPPPPI) are compositionally biased toward pro residues.

The protein belongs to the protein kinase superfamily. Ser/Thr protein kinase family. Interacts with calmodulin (CaM) in a calcium- (Ca(2+)-) dependent manner. Binds to MEKK1. In terms of tissue distribution, similar transcript expression levels in seedlings, roots, leaves, stems and flowers, and lower levels in siliques, but protein accumulates mostly in 7-day-old seedlings, old roots and young leaves and, to a lower extent, in young roots, old leaves, flowers and siliques (at protein level).

The protein resides in the cell membrane. Its subcellular location is the endosome membrane. The enzyme catalyses L-seryl-[protein] + ATP = O-phospho-L-seryl-[protein] + ADP + H(+). The catalysed reaction is L-threonyl-[protein] + ATP = O-phospho-L-threonyl-[protein] + ADP + H(+). Its activity is regulated as follows. Kinase activity is stimulated by calcium/calmodulin, but blocked by chlorpromazine. Required for cold tolerance, via the activation of MAP kinases activity. Phosphorylates and activates MEKK1 in response to cold in a calcium-dependent manner. The polypeptide is Calcium/calmodulin-regulated receptor-like kinase 1 (Arabidopsis thaliana (Mouse-ear cress)).